The following is a 289-amino-acid chain: Urease accessory protein UreD (289 aa).

It belongs to the UreD family. As to quaternary structure, ureD, UreF and UreG form a complex that acts as a GTP-hydrolysis-dependent molecular chaperone, activating the urease apoprotein by helping to assemble the nickel containing metallocenter of UreC. The UreE protein probably delivers the nickel.

The protein localises to the cytoplasm. Its function is as follows. Required for maturation of urease via the functional incorporation of the urease nickel metallocenter. The protein is Urease accessory protein UreD of Cupriavidus pinatubonensis (strain JMP 134 / LMG 1197) (Cupriavidus necator (strain JMP 134)).